A 332-amino-acid polypeptide reads, in one-letter code: Fructose-1,6-bisphosphatase class 1 (332 aa).

Mg(2+) contacts are provided by Glu89, Asp110, Leu112, and Asp113. Substrate is bound by residues 113–116 (DGSS), Asn206, Tyr239, 257–259 (YLY), and Lys269. Glu275 contributes to the Mg(2+) binding site.

The protein belongs to the FBPase class 1 family. As to quaternary structure, homotetramer. It depends on Mg(2+) as a cofactor.

The protein localises to the cytoplasm. It carries out the reaction beta-D-fructose 1,6-bisphosphate + H2O = beta-D-fructose 6-phosphate + phosphate. The protein operates within carbohydrate biosynthesis; gluconeogenesis. The protein is Fructose-1,6-bisphosphatase class 1 of Escherichia coli O157:H7.